The chain runs to 42 residues: Proline-rich antimicrobial peptide 2 (42 aa).

Hemolymph.

It localises to the secreted. Antimicrobial protein. Has antibacterial activity against the Gram-positive bacterium M.luteus (MIC=8.6 uM). Lacks antibacterial activity against the Gram-positive bacteria B.circulans, L.monocytogenes, S.aureus, and S.lutea, and the Gram-negative bacteria E.coli D31, E.coli ATCC 25922, and S.typhimurium. Lacks antifungal activity against S.cerevisiae, P.pastoris, Z.marxianus, C.albicans, C.fructus, C.wickerhamii, A.niger, F.oxysporum, and T.harizianum. The sequence is that of Proline-rich antimicrobial peptide 2 from Galleria mellonella (Greater wax moth).